The primary structure comprises 436 residues: Trigger factor (436 aa).

2 disordered regions span residues 1 to 26 (MQVS…RVEN) and 81 to 100 (QESL…TGEG). The PPIase FKBP-type domain occupies 161–246 (EDRVVIDFHG…VKRVEEPQLP (86 aa)).

It belongs to the FKBP-type PPIase family. Tig subfamily.

The protein localises to the cytoplasm. The enzyme catalyses [protein]-peptidylproline (omega=180) = [protein]-peptidylproline (omega=0). Involved in protein export. Acts as a chaperone by maintaining the newly synthesized protein in an open conformation. Functions as a peptidyl-prolyl cis-trans isomerase. In Halorhodospira halophila (strain DSM 244 / SL1) (Ectothiorhodospira halophila (strain DSM 244 / SL1)), this protein is Trigger factor.